We begin with the raw amino-acid sequence, 1007 residues long: RNA-binding protein 26 (1007 aa).

Residue lysine 94 forms a Glycyl lysine isopeptide (Lys-Gly) (interchain with G-Cter in SUMO2) linkage. Lysine 106 participates in a covalent cross-link: Glycyl lysine isopeptide (Lys-Gly) (interchain with G-Cter in SUMO1); alternate. Lysine 106 participates in a covalent cross-link: Glycyl lysine isopeptide (Lys-Gly) (interchain with G-Cter in SUMO2); alternate. The span at 106 to 118 (KKEEITKEEEREK) shows a compositional bias: basic and acidic residues. The disordered stretch occupies residues 106-241 (KKEEITKEEE…YTPVSSVPSI (136 aa)). The residue at position 127 (serine 127) is a Phosphoserine. Residues 134 to 168 (RYRENRSRDERKKDDRSRKRDYDRNPPRRDSYRDR) are compositionally biased toward basic and acidic residues. The span at 169 to 186 (YNRRRGRSRSYSRSRSRS) shows a compositional bias: basic residues. Composition is skewed to basic and acidic residues over residues 187–201 (WSKE…DRSR) and 209–227 (RSRE…RTDP). Over residues 228-241 (LENNYTPVSSVPSI) the composition is skewed to polar residues. Residues 288–316 (PMPKKRCRDYDEKGFCMRGDMCPFDHGSD) form a C3H1-type zinc finger. The span at 334–388 (QPPVVEGPPPPGLPPPPPILTPPPVNLRPPVPPPGPLPPSLPPVTGPPPPLPPLQ) shows a compositional bias: pro residues. Disordered regions lie at residues 334 to 404 (QPPV…SSVP) and 460 to 519 (IGLT…TNSP). Residues 394 to 404 (APPNSATSSVP) show a composition bias toward low complexity. Position 496 is a phosphoserine (serine 496). An N6-acetyllysine modification is found at lysine 510. Serine 518 is modified (phosphoserine). Residues 532–606 (TKLELRKVPP…RFIKVYWHRE (75 aa)) enclose the RRM 1 domain. Residue serine 616 is modified to Phosphoserine. Coiled coils occupy residues 719-795 (DNNE…KAAS) and 823-847 (KKMQ…EAAK). Residues 853–884 (SGRGRGIHSRGRGAVHGRGRGRGRGRGVPGHA) are disordered. The segment covering 857 to 877 (RGIHSRGRGAVHGRGRGRGRG) has biased composition (basic residues). An RRM 2 domain is found at 891–960 (RALEISAFTE…QDLKLAWNKP (70 aa)). A disordered region spans residues 966 to 1007 (AVETEEVEPDEEEFQEESLVDDSLLQDDDEEEEDNESRSWRR). Acidic residues predominate over residues 968-1000 (ETEEVEPDEEEFQEESLVDDSLLQDDDEEEEDN).

Functionally, may be involved in the turnover of nuclear polyadenylated (pA+) RNA. The protein is RNA-binding protein 26 of Homo sapiens (Human).